The chain runs to 274 residues: Shikimate dehydrogenase (NADP(+)) (274 aa).

Residues 14–16 and T60 each bind shikimate; that span reads SKS. K64 serves as the catalytic Proton acceptor. Residue E76 participates in NADP(+) binding. Positions 85 and 101 each coordinate shikimate. NADP(+) contacts are provided by residues 126–130, 150–155, and M214; these read GAGGA and NRTAEK. Y216 is a binding site for shikimate. G238 serves as a coordination point for NADP(+).

This sequence belongs to the shikimate dehydrogenase family. Homodimer.

The enzyme catalyses shikimate + NADP(+) = 3-dehydroshikimate + NADPH + H(+). It participates in metabolic intermediate biosynthesis; chorismate biosynthesis; chorismate from D-erythrose 4-phosphate and phosphoenolpyruvate: step 4/7. In terms of biological role, involved in the biosynthesis of the chorismate, which leads to the biosynthesis of aromatic amino acids. Catalyzes the reversible NADPH linked reduction of 3-dehydroshikimate (DHSA) to yield shikimate (SA). This is Shikimate dehydrogenase (NADP(+)) from Pseudomonas paraeruginosa (strain DSM 24068 / PA7) (Pseudomonas aeruginosa (strain PA7)).